The sequence spans 390 residues: S-adenosylmethionine synthase 1 (390 aa).

E9 lines the Mg(2+) pocket. Residue H15 participates in ATP binding. Position 43 (E43) interacts with K(+). 2 residues coordinate L-methionine: E56 and Q99. Residues 167 to 169 (DGK), 235 to 238 (SGRF), D246, 252 to 253 (RK), A269, K273, and K277 each bind ATP. Position 246 (D246) interacts with L-methionine. K277 is a binding site for L-methionine.

Belongs to the AdoMet synthase family. Homotetramer. Mn(2+) is required as a cofactor. Requires Mg(2+) as cofactor. The cofactor is Co(2+). K(+) serves as cofactor.

The protein localises to the cytoplasm. It carries out the reaction L-methionine + ATP + H2O = S-adenosyl-L-methionine + phosphate + diphosphate. It participates in amino-acid biosynthesis; S-adenosyl-L-methionine biosynthesis; S-adenosyl-L-methionine from L-methionine: step 1/1. Functionally, catalyzes the formation of S-adenosylmethionine from methionine and ATP. The reaction comprises two steps that are both catalyzed by the same enzyme: formation of S-adenosylmethionine (AdoMet) and triphosphate, and subsequent hydrolysis of the triphosphate. This chain is S-adenosylmethionine synthase 1 (SAMS1), found in Nicotiana tabacum (Common tobacco).